A 514-amino-acid polypeptide reads, in one-letter code: ATP synthase subunit alpha (514 aa).

170–177 is an ATP binding site; sequence GDRQIGKT.

This sequence belongs to the ATPase alpha/beta chains family. F-type ATPases have 2 components, CF(1) - the catalytic core - and CF(0) - the membrane proton channel. CF(1) has five subunits: alpha(3), beta(3), gamma(1), delta(1), epsilon(1). CF(0) has three main subunits: a(1), b(2) and c(9-12). The alpha and beta chains form an alternating ring which encloses part of the gamma chain. CF(1) is attached to CF(0) by a central stalk formed by the gamma and epsilon chains, while a peripheral stalk is formed by the delta and b chains.

Its subcellular location is the cell inner membrane. It carries out the reaction ATP + H2O + 4 H(+)(in) = ADP + phosphate + 5 H(+)(out). In terms of biological role, produces ATP from ADP in the presence of a proton gradient across the membrane. The alpha chain is a regulatory subunit. The sequence is that of ATP synthase subunit alpha from Pseudomonas fluorescens (strain ATCC BAA-477 / NRRL B-23932 / Pf-5).